A 513-amino-acid chain; its full sequence is Cobyric acid synthase (513 aa).

Residues 252 to 457 (KIDIAVIRLP…LHGIFDEEGI (206 aa)) enclose the GATase cobBQ-type domain. The Nucleophile role is filled by Cys-333. His-449 is a catalytic residue.

It belongs to the CobB/CobQ family. CobQ subfamily.

The protein operates within cofactor biosynthesis; adenosylcobalamin biosynthesis. Its function is as follows. Catalyzes amidations at positions B, D, E, and G on adenosylcobyrinic A,C-diamide. NH(2) groups are provided by glutamine, and one molecule of ATP is hydrogenolyzed for each amidation. The protein is Cobyric acid synthase of Lachnoclostridium phytofermentans (strain ATCC 700394 / DSM 18823 / ISDg) (Clostridium phytofermentans).